Here is a 270-residue protein sequence, read N- to C-terminus: Tubulin-specific chaperone B (270 aa).

Positions 214–256 (GTVEFSSGVWIGVELDLPLGKNDGSVKGKQYFQCSPKYGCFAK) constitute a CAP-Gly domain.

It belongs to the TBCB family. As to quaternary structure, supercomplex made of cofactors A to E. Cofactors A and D function by capturing and stabilizing tubulin in a quasi-native conformation. Cofactor E binds to the cofactor D-tubulin complex; interaction with cofactor C then causes the release of tubulin polypeptides that are committed to the native state.

Its subcellular location is the cytoplasm. It is found in the cytoskeleton. Its function is as follows. Binds to alpha-tubulin folding intermediates after their interaction with cytosolic chaperonin in the pathway leading from newly synthesized tubulin to properly folded heterodimer. This chain is Tubulin-specific chaperone B (tbcb), found in Dictyostelium discoideum (Social amoeba).